The primary structure comprises 269 residues: Formamidopyrimidine-DNA glycosylase (269 aa).

The Schiff-base intermediate with DNA role is filled by proline 2. The Proton donor role is filled by glutamate 3. Lysine 57 acts as the Proton donor; for beta-elimination activity in catalysis. DNA contacts are provided by histidine 90, arginine 109, and lysine 150. The FPG-type zinc-finger motif lies at 235 to 269 (QVYGRKGEPCRVCGTPIVATKHAQRATFYCRQCQK). Residue arginine 259 is the Proton donor; for delta-elimination activity of the active site.

The protein belongs to the FPG family. As to quaternary structure, monomer. Zn(2+) is required as a cofactor.

The catalysed reaction is Hydrolysis of DNA containing ring-opened 7-methylguanine residues, releasing 2,6-diamino-4-hydroxy-5-(N-methyl)formamidopyrimidine.. It carries out the reaction 2'-deoxyribonucleotide-(2'-deoxyribose 5'-phosphate)-2'-deoxyribonucleotide-DNA = a 3'-end 2'-deoxyribonucleotide-(2,3-dehydro-2,3-deoxyribose 5'-phosphate)-DNA + a 5'-end 5'-phospho-2'-deoxyribonucleoside-DNA + H(+). In terms of biological role, involved in base excision repair of DNA damaged by oxidation or by mutagenic agents. Acts as a DNA glycosylase that recognizes and removes damaged bases. Has a preference for oxidized purines, such as 7,8-dihydro-8-oxoguanine (8-oxoG). Has AP (apurinic/apyrimidinic) lyase activity and introduces nicks in the DNA strand. Cleaves the DNA backbone by beta-delta elimination to generate a single-strand break at the site of the removed base with both 3'- and 5'-phosphates. This is Formamidopyrimidine-DNA glycosylase from Shigella dysenteriae serotype 1 (strain Sd197).